The primary structure comprises 225 residues: Proteasome activator 28 (225 aa).

The protein belongs to the PA28 family. In terms of assembly, homoheptamer. The homoheptamer associates with the 20S proteasome.

Its subcellular location is the nucleus. Functionally, subunit of the 11S REG (also called PA28) proteasome regulator, a doughnut-shaped homoheptamer which associates with the proteasome. 11S REG-gamma activates preferentially the trypsin-like catalytic subunit of the proteasome. May also be involved in cell cycle regulation. The chain is Proteasome activator 28 (psmE3) from Dictyostelium discoideum (Social amoeba).